The primary structure comprises 804 residues: MSKLSFRARALDATKPLPIFRGNDMPDLNDCVSINRAVPQMPTGMEKEEESEHHLQRAISAQQVFREKKECMVIPVPEAESNVHYYSRLYKGEFKQPKQFIHITPFNLDYEQPDYDMDSEDETLLNRLNRKMEIKPLQFEIMIDRLEKASSNQLVSLQEAKLLLNEDDYLIKSVYDYWVRKRKNCRGPCLIPQVKQEKRDGSTNNDPYVAFRRRTEKMQTRKNRKNDEASYEKMLKLRREFSRAITILEMIKRREKTKRELLHLTLEVVEKRYNLGDFGGEILNEIKIPKADKEIYAIPPSLHNGNHHKVPECKVKNTHHLNVKDEVLEIVRLKKKYPKKPKADILVTPLPQANSEPLAVINRSDIKQYDFQSSDDDEFPQVPSPLSELEEENDPDGSYAFRRRAGCQYYAPHLDQMNDTPETTDLSGLARHRNRHCLTTLTVPRRCIGFARKRLGRGGRVIMDRLSTEHDSVLKQIDPEMLSGFSSSSHIAQPPSSPSRTNASDRHCENRLSLPEILSNIKSCRLQCFQPRLLHTQDSDREECTSRLGQAVNLKRVSSSLLNTSKNGITVTGGITEEQFQTHQQQLVQMQKQQLAQLQQKQQSQQSLQQSHPKAQGSGSSDCMSKTLDSASALFAASAVVNSPAPVRSEVNKDQNAGHSNLNGVVQPSGTAKTLYSTNMALSSSPGISTVQLVRTVGHPTTNHLIPTLCTSNPQTLTMGNSCLANTVHLNNVSVVSPVNVHLNTRTSAPSPTALKLATVAASMDRVPKVTPSSAMSSIARENHEPERLGLNGITDTTVAMEVT.

4 disordered regions span residues glutamine 372–proline 395, glycine 484–cysteine 508, glutamine 603–methionine 624, and proline 646–serine 669. 2 stretches are compositionally biased toward polar residues: residues serine 611–methionine 624 and aspartate 654–serine 669.

It belongs to the enhancer of polycomb family.

The protein resides in the nucleus. Functionally, may play a role in transcription or DNA repair. In Xenopus laevis (African clawed frog), this protein is Enhancer of polycomb homolog 2 (epc2).